An 846-amino-acid polypeptide reads, in one-letter code: Disrupted in schizophrenia 1 homolog (846 aa).

Disordered regions lie at residues 1 to 53, 127 to 147, 231 to 257, 277 to 312, and 409 to 436; these read MQGA…IGFL, HSGV…GDSG, EAEP…GEPR, TRSN…QDGG, and LHGA…AQDS. An interaction with MAP1A region spans residues 1 to 288; it reads MQGAGSRGAW…SNRQPECGMV (288 aa). Basic and acidic residues-rich tracts occupy residues 133–143 and 248–257; these read GNDRRQSERLT and GSDRPHGEPR. Over residues 277-300 the composition is skewed to polar residues; it reads TRSNRQPECGMVSSSDAGFSSQDA. The segment at 289 to 686 is interaction with TRAF3IP1; sequence SSSDAGFSSQ…LERVWKADLE (398 aa). Residues 429–587 are required for localization to punctate cytoplasmic foci; the sequence is RRTTAQDSLP…LLEAKMLALS (159 aa). The interval 435–846 is necessary and sufficient for interaction with PCNT and localization at the centrosome; sequence DSLPGLAVTR…STAGAQEAED (412 aa). A coiled-coil region spans residues 440 to 489; it reads LAVTRRDWLMREKEQLQKEIEALRARVSVLEAKEQRLSQELEDQEMLLRW. The interaction with ATF4 and ATF5 stretch occupies residues 588–846; the sequence is GSCFSTAKEL…STAGAQEAED (259 aa). Positions 721–846 are interaction with NDEL1 and PAFAH1B1; sequence TAALAVPRTP…STAGAQEAED (126 aa). Positions 721 to 846 are interaction with PAFAH1B1; sequence TAALAVPRTP…STAGAQEAED (126 aa). Positions 795–828 are interaction with NDEL1; the sequence is GHDEALFQSLQGELQMVKETLQTMFLQLQPAKEA.

Interacts with NDEL1. Interacts with CCDC88A (via C-terminus); the interaction is direct. Interacts with GSK3B. Interacts with tubulin alpha, ACTN2, ANKHD1, ATF4, ATF5, CEP63, EIF3S3, MAP1A, NDEL1, PAFAH1B1, RANBP9, SPTBN4, SYNE1 and TRAF3IP1. Interaction with microtubules may be mediated in part by TRAF3IP1. Interacts (via C-terminal) with PCNT. Interacts with CHCHD6. Interacts with CCDC141. Interacts with FBXW7, the substrate-recognition component of a SCF (SKP1-CUL1-F-box protein) E3 ubiquitin-protein ligase complex; the interaction targets DISC1 for proteasomal degradation. Interacts with ZNF365. Interacts with ATF4; inhibiting ATF4 transcription factor activity by disrupting ATF4 dimerization and DNA-binding. Interacts with PDE4B. In terms of processing, ubiquitinated. Ubiquitination with 'Lys-48'-linked polyubiquitin chains leads to its proteasomal degradation. Expressed in brain, heart, kidney, liver and thymus. Within the brain expression is high in the cerebral cortex, hippocampus and olfactory bulb and is also seen at lower levels in the cerebellum (at protein level).

The protein localises to the cytoplasm. It localises to the cytoskeleton. Its subcellular location is the mitochondrion. The protein resides in the microtubule organizing center. It is found in the centrosome. The protein localises to the postsynaptic density. Its function is as follows. Involved in the regulation of multiple aspects of embryonic and adult neurogenesis. Required for neural progenitor proliferation in the ventrical/subventrical zone during embryonic brain development and in the adult dentate gyrus of the hippocampus. Participates in the Wnt-mediated neural progenitor proliferation as a positive regulator by modulating GSK3B activity and CTNNB1 abundance. Plays a role as a modulator of the AKT-mTOR signaling pathway controlling the tempo of the process of newborn neurons integration during adult neurogenesis, including neuron positioning, dendritic development and synapse formation. Inhibits the activation of AKT-mTOR signaling upon interaction with CCDC88A. Regulates the migration of early-born granule cell precursors toward the dentate gyrus during the hippocampal development. Inhibits ATF4 transcription factor activity in neurons by disrupting ATF4 dimerization and DNA-binding. Plays a role, together with PCNT, in the microtubule network formation. The protein is Disrupted in schizophrenia 1 homolog of Rattus norvegicus (Rat).